We begin with the raw amino-acid sequence, 541 residues long: Chaperonin GroEL (541 aa).

ATP-binding positions include 29-32, 86-90, glycine 413, 478-480, and aspartate 494; these read TLGP, DGTTT, and NAL.

The protein belongs to the chaperonin (HSP60) family. In terms of assembly, forms a cylinder of 14 subunits composed of two heptameric rings stacked back-to-back. Interacts with the co-chaperonin GroES.

It is found in the cytoplasm. The catalysed reaction is ATP + H2O + a folded polypeptide = ADP + phosphate + an unfolded polypeptide.. Functionally, together with its co-chaperonin GroES, plays an essential role in assisting protein folding. The GroEL-GroES system forms a nano-cage that allows encapsulation of the non-native substrate proteins and provides a physical environment optimized to promote and accelerate protein folding. This is Chaperonin GroEL from Lachnoclostridium phytofermentans (strain ATCC 700394 / DSM 18823 / ISDg) (Clostridium phytofermentans).